The chain runs to 260 residues: RNA polymerase sigma-G factor (260 aa).

The segment at 1-71 (MSRNKVEICG…GEYVDDLFQV (71 aa)) is recognizes anti-sigma-G factor Gin (csfB). The Polymerase core binding signature appears at 67 to 80 (DLFQVGCIGLMKSI). The H-T-H motif DNA-binding region spans 229 to 248 (QMEVAEEIGISQAQVSRLEK).

The protein belongs to the sigma-70 factor family. Interacts with anti-sigma-G factor Gin (csfB).

Its activity is regulated as follows. Activity repressed by anti-sigma-G factor Gin (csfB) and Lon protease during the early stages of forespore development. When both Gin and sigma-G are expressed in E.coli Gin inhibits sigma-G activity, strongly suggesting Gin inhibits by direct physical interaction. Sigma factors are initiation factors that promote the attachment of RNA polymerase to specific initiation sites and are then released. This sigma factor is responsible for the expression of sporulation specific genes in the forespore. This Bacillus subtilis (strain 168) protein is RNA polymerase sigma-G factor (sigG).